Consider the following 105-residue polypeptide: UPF0235 protein CT1832 (105 aa).

Belongs to the UPF0235 family.

The sequence is that of UPF0235 protein CT1832 from Chlorobaculum tepidum (strain ATCC 49652 / DSM 12025 / NBRC 103806 / TLS) (Chlorobium tepidum).